The primary structure comprises 163 residues: Aspartate carbamoyltransferase regulatory chain (163 aa).

The Zn(2+) site is built by C113, C118, C143, and C146.

The protein belongs to the PyrI family. Contains catalytic and regulatory chains. The cofactor is Zn(2+).

Involved in allosteric regulation of aspartate carbamoyltransferase. In Caldivirga maquilingensis (strain ATCC 700844 / DSM 13496 / JCM 10307 / IC-167), this protein is Aspartate carbamoyltransferase regulatory chain.